The chain runs to 572 residues: Proline--tRNA ligase (572 aa).

This sequence belongs to the class-II aminoacyl-tRNA synthetase family. ProS type 1 subfamily. As to quaternary structure, homodimer.

Its subcellular location is the cytoplasm. The catalysed reaction is tRNA(Pro) + L-proline + ATP = L-prolyl-tRNA(Pro) + AMP + diphosphate. Its function is as follows. Catalyzes the attachment of proline to tRNA(Pro) in a two-step reaction: proline is first activated by ATP to form Pro-AMP and then transferred to the acceptor end of tRNA(Pro). As ProRS can inadvertently accommodate and process non-cognate amino acids such as alanine and cysteine, to avoid such errors it has two additional distinct editing activities against alanine. One activity is designated as 'pretransfer' editing and involves the tRNA(Pro)-independent hydrolysis of activated Ala-AMP. The other activity is designated 'posttransfer' editing and involves deacylation of mischarged Ala-tRNA(Pro). The misacylated Cys-tRNA(Pro) is not edited by ProRS. In Klebsiella pneumoniae subsp. pneumoniae (strain ATCC 700721 / MGH 78578), this protein is Proline--tRNA ligase.